Consider the following 610-residue polypeptide: 6(G)-fructosyltransferase (610 aa).

Over 1-20 (MATSLQAPILGSRPPRRTLR) the chain is Cytoplasmic. The helical; Signal-anchor for type II membrane protein transmembrane segment at 21–38 (FLSFALFSALVLVVASFS) threads the bilayer. Residues 39-610 (SRKSESGSGL…NQYYPFTSSN (572 aa)) lie on the Vacuolar side of the membrane. Substrate is bound by residues 79–82 (YMND), Q98, W106, 141–142 (WT), and 207–208 (RD). Residue D82 is part of the active site. N-linked (GlcNAc...) asparagine glycosylation is found at N215, N229, and N248. A substrate-binding site is contributed by E266. The N-linked (GlcNAc...) asparagine glycan is linked to N459. A disulfide bridge connects residues C460 and C508. N-linked (GlcNAc...) asparagine glycosylation is found at N580 and N597.

Belongs to the glycosyl hydrolase 32 family. Post-translationally, might be processed in two N-terminal and C-terminal proteolytic fragments.

It localises to the vacuole membrane. It catalyses the reaction [1-beta-D-fructofuranosyl-(2-&gt;1)-]m+1 alpha-D-glucopyranoside + [1-beta-D-fructofuranosyl-(2-&gt;1)-]n+1 alpha-D-glucopyranoside = [1-beta-D-fructofuranosyl-(2-&gt;1)-]m alpha-D-glucopyranoside + [1-beta-D-fructofuranosyl-(2-&gt;1)-]n+1 beta-D-fructofuranosyl-(2-&gt;6)-alpha-D-glucopyranoside (m &gt; 0, n &gt;= 0).. Functionally, involved in the synthesis of fructan of the inulin neoseries. Has no 1-FFT activity. The sequence is that of 6(G)-fructosyltransferase (FT1) from Asparagus officinalis (Garden asparagus).